The primary structure comprises 33 residues: Dolabellanin-B2 (33 aa).

In terms of processing, contains two disulfide bonds. Post-translationally, up to two of the methionines may be oxidized to methionine sulfoxides.

It is found in the secreted. Its function is as follows. Has antibacterial activity against Gram-negative bacteria E.coli JM109 and DH5-alpha, H.influenza IID 983, and V.vulnificus RIMD 2219009. Has antibacterial activity against Gram-positive bacteria S.aureus IID 1677, B.subtilis RIMD 0225014 and L.monocytogenes VIU206. Possesses antifungal activity against S.cerevisiae A581A, S.pombe IFO 1628, C.albicans ATCC 36232 and TIMM-1623, and C.tropicalis TIMM-0313. This chain is Dolabellanin-B2, found in Dolabella auricularia (Shoulderblade sea cat).